The following is a 391-amino-acid chain: Heme A synthase (391 aa).

The next 8 membrane-spanning stretches (helical) occupy residues 37 to 57 (IRLW…VGGL), 121 to 141 (RQLG…FLAA), 152 to 172 (LLAL…MVAS), 186 to 206 (LATH…QALL), 229 to 249 (TTVL…VAGI), 298 to 318 (FLHR…WIFG), 332 to 352 (LLAM…LSAA), and 354 to 374 (WQVA…ILHA). His300 provides a ligand contact to heme. Heme is bound at residue His360.

Belongs to the COX15/CtaA family. Type 2 subfamily. In terms of assembly, interacts with CtaB. Requires heme b as cofactor.

The protein localises to the cell membrane. The catalysed reaction is Fe(II)-heme o + 2 A + H2O = Fe(II)-heme a + 2 AH2. It participates in porphyrin-containing compound metabolism; heme A biosynthesis; heme A from heme O: step 1/1. Its function is as follows. Catalyzes the conversion of heme O to heme A by two successive hydroxylations of the methyl group at C8. The first hydroxylation forms heme I, the second hydroxylation results in an unstable dihydroxymethyl group, which spontaneously dehydrates, resulting in the formyl group of heme A. In Cereibacter sphaeroides (strain ATCC 17023 / DSM 158 / JCM 6121 / CCUG 31486 / LMG 2827 / NBRC 12203 / NCIMB 8253 / ATH 2.4.1.) (Rhodobacter sphaeroides), this protein is Heme A synthase.